Here is a 440-residue protein sequence, read N- to C-terminus: Argininosuccinate lyase (440 aa).

Belongs to the lyase 1 family. Argininosuccinate lyase subfamily.

The protein resides in the cytoplasm. The enzyme catalyses 2-(N(omega)-L-arginino)succinate = fumarate + L-arginine. It participates in amino-acid biosynthesis; L-arginine biosynthesis; L-arginine from L-ornithine and carbamoyl phosphate: step 3/3. This Clostridium botulinum (strain Kyoto / Type A2) protein is Argininosuccinate lyase.